The primary structure comprises 213 residues: MLDQQLLIGTVFLAGLASFLSPCIFPIIPIYFGILSKGGKKVLNTFLFILGLSLTFVSLGFSFGFLGNILFSNTTRIIAGVIVIILGIHQLGIFKIGLLERTKLVEIKTSGKSTALEAFVLGLTFSLGWTPCIGPILASVLALSGDEGSALYGASMMFVYVLGLATPFVLFSFFSDSLLKRAKGLNKHLDKFKIGGGILIIVMGILLITNNFS.

6 helical membrane-spanning segments follow: residues 15–35, 46–66, 77–97, 118–138, 154–174, and 192–212; these read GLASFLSPCIFPIIPIYFGIL, FLFILGLSLTFVSLGFSFGFL, IIAGVIVIILGIHQLGIFKIG, AFVLGLTFSLGWTPCIGPILA, ASMMFVYVLGLATPFVLFSFF, and FKIGGGILIIVMGILLITNNF.

This sequence belongs to the DsbD family.

Its subcellular location is the cell membrane. In terms of biological role, could be involved in cytochrome c synthesis. This is Putative cytochrome c-type biogenesis protein HI_1454 from Haemophilus influenzae (strain ATCC 51907 / DSM 11121 / KW20 / Rd).